Reading from the N-terminus, the 392-residue chain is Tyrosine--tRNA ligase (392 aa).

The 'HIGH' region signature appears at 41–50 (PTAPDLHLGH). The 'KMSKS' region motif lies at 225 to 229 (KMSKS). Lysine 228 is an ATP binding site. Residues 330–390 (LRAVDFLVKI…VGKKKFYRVV (61 aa)) form the S4 RNA-binding domain.

The protein belongs to the class-I aminoacyl-tRNA synthetase family. TyrS type 2 subfamily. As to quaternary structure, homodimer.

It localises to the cytoplasm. It carries out the reaction tRNA(Tyr) + L-tyrosine + ATP = L-tyrosyl-tRNA(Tyr) + AMP + diphosphate + H(+). Functionally, catalyzes the attachment of tyrosine to tRNA(Tyr) in a two-step reaction: tyrosine is first activated by ATP to form Tyr-AMP and then transferred to the acceptor end of tRNA(Tyr). This Aquifex aeolicus (strain VF5) protein is Tyrosine--tRNA ligase.